We begin with the raw amino-acid sequence, 801 residues long: MDAATPGNGIISDVVFVIEGTANLGPYFESLRKHYLLPAIEYFNGGPPAETDFGGDYGGTQYSLVVFNTVDCAPESYVQCHAPTSSAYEFVQWLDSIKFMGGGGESCSLIAEGLSTALQLFDDFKKMREQIGQTHKVCILICNSPPYLLPAVESTTYSGYTTENLVQKIGERGIHFSIISPRKLPALRTLFEKAMPVGLIEPQPKDYSQDPRHMILVRGMVLPVGGATSVPGVMPPKQHISQPPLPVVPPQIASAPSHQLPPVQPPYMQVPQQSTLTPAHAAAHSAVEAAKNQKNSPSNRFLLPNLNPMPNAPAVGTPFNQPPAPTLPPNASVPKMVPSPSSLMTPASQSSLITTVTTGPGPAPVQLQQQGAPQQPVPPSMPITGAVGGVQAPQPSQPQIGTVQLPCTQTPVNGNKLLAWSGVLEWQEKPRSVSVDNNAKLTRSLPCQVYINPGENLKTDQWPQKLIMQLIPQQLLTTLGPLFRNSRMVQFHFTNKDLESLKGLYRIMGSGFAGCVHFPHTTPCEVRVLMLLYSSKKKIFMGLIPNDQSGFVNGIRQVITNHKQVQMQKIDQQRNMGAVQGVGAGSVPANSQGFLQKQPGTLPVGQAVSQQMQGQQVAPGMPSISQVAMMDEQQRSQNLLHIRVQQPQQLASQAPPQATQSSVQAPGQPQNPQPGAMLRPQNPGANPQLRNLLLSQQPPQSSVPQTQQPLHHMQQAAQSMLPHQAMGQQMQHQAPGQLQLPGQSLMHQTPAQQWGNQMQQRAPIPGTLMMSAGPRGPVPQSGLQQVQAQSVMEDDILMDLI.

3 stretches are compositionally biased toward low complexity: residues 647–676 (PQQLASQAPPQATQSSVQAPGQPQNPQPGA), 687–710 (PQLRNLLLSQQPPQSSVPQTQQPL), and 722–735 (PHQAMGQQMQHQAP). The segment at 647 to 735 (PQQLASQAPP…MGQQMQHQAP (89 aa)) is disordered. Residues 689-693 (LRNLL) carry the LXXLL motif motif.

This sequence belongs to the Mediator complex subunit 25 family. As to quaternary structure, component of the Mediator complex.

The protein resides in the nucleus. Functionally, component of the Mediator complex, a coactivator involved in the regulated transcription of nearly all RNA polymerase II-dependent genes. Mediator functions as a bridge to convey information from gene-specific regulatory proteins to the basal RNA polymerase II transcription machinery. Mediator is recruited to promoters by direct interactions with regulatory proteins and serves as a scaffold for the assembly of a functional preinitiation complex with RNA polymerase II and the general transcription factors. The chain is Mediator of RNA polymerase II transcription subunit 25 (med25) from Xenopus laevis (African clawed frog).